We begin with the raw amino-acid sequence, 153 residues long: Vasotocin-neurophysin VT 1 (153 aa).

The first 20 residues, 1 to 20 (MPYSTFPLLWVLGLLALSSA), serve as a signal peptide directing secretion. The cysteines at positions 21 and 26 are disulfide-linked. Gly29 carries the post-translational modification Glycine amide. Intrachain disulfides connect Cys41–Cys85, Cys44–Cys58, Cys52–Cys75, Cys59–Cys65, Cys92–Cys104, Cys98–Cys116, and Cys105–Cys110.

This sequence belongs to the vasopressin/oxytocin family. Post-translationally, seven disulfide bonds are present in neurophysin.

The protein localises to the secreted. Its function is as follows. Vasotocin is an antidiuretic hormone. This Oncorhynchus keta (Chum salmon) protein is Vasotocin-neurophysin VT 1.